A 283-amino-acid chain; its full sequence is Homeobox-leucine zipper protein HAT2 (283 aa).

The tract at residues 64-134 is disordered; it reads VNCEEDTGVS…GETSRKKLRL (71 aa). Low complexity predominate over residues 73 to 84; sequence SSPNSTISSTIS. The segment at residues 127-186 is a DNA-binding region (homeobox); the sequence is TSRKKLRLSKDQSAFLEETFKEHNTLNPKQKLALAKKLNLTARQVEVWFQNRRARTKLKQ. Residues 194–215 form a leucine-zipper region; the sequence is LKRCVEKLTEENRRLQKEAMEL.

The protein belongs to the HD-ZIP homeobox family. Class II subfamily. In terms of assembly, interacts with RBR1.

The protein resides in the nucleus. In terms of biological role, probable transcription factor that plays a role in auxin-mediated morphogenesis. Negatively regulates lateral root elongation. The chain is Homeobox-leucine zipper protein HAT2 (HAT2) from Arabidopsis thaliana (Mouse-ear cress).